The sequence spans 103 residues: U-scoloptoxin(24)-Er1a (103 aa).

An N-terminal signal peptide occupies residues 1-23; it reads MVKSLHCLIGIVLFLAILNAGNG.

It belongs to the scoloptoxin-24 family. Post-translationally, contains 1 disulfide bond. Expressed by the venom gland.

The protein resides in the secreted. This is U-scoloptoxin(24)-Er1a from Ethmostigmus rubripes (Giant centipede).